Consider the following 198-residue polypeptide: MDSLQKQELRRPKIHGAVQVSPYQPPTLASLQRLLWVRRTATLTHINEVWPNLFLGDAYAARDKGRLIQLGITHVVNVAAGKFQVDTGAKFYRGTPLEYYGIEADDNPFFDLSVHFLPVARYIRDALNIPRSRVLVHCAMGVSRSATIVLAFLMIFENMTLVDAIQTVQAHRDICPNSGFLRQLQVLDNRLRRETGRL.

Residues 45-193 (HINEVWPNLF…LQVLDNRLRR (149 aa)) form the Tyrosine-protein phosphatase domain. The active-site Phosphocysteine intermediate is the C138.

It belongs to the protein-tyrosine phosphatase family. Non-receptor class dual specificity subfamily. In terms of tissue distribution, most abundantly expressed in the testis.

It carries out the reaction O-phospho-L-tyrosyl-[protein] + H2O = L-tyrosyl-[protein] + phosphate. The enzyme catalyses O-phospho-L-seryl-[protein] + H2O = L-seryl-[protein] + phosphate. It catalyses the reaction O-phospho-L-threonyl-[protein] + H2O = L-threonyl-[protein] + phosphate. Functionally, dual specificity phosphatase that dephosphorylates MAPK8/JNK and MAPK14/p38, but not MAPK1/ERK2, in vitro. Exhibits intrinsic phosphatase activity towards both phospho-seryl/threonyl and -tyrosyl residues, with similar specific activities in vitro. The protein is Dual specificity protein phosphatase 13B of Mus musculus (Mouse).